A 448-amino-acid chain; its full sequence is NADP-specific glutamate dehydrogenase (448 aa).

Lys88, Gln109, and Lys112 together coordinate substrate. The Proton donor role is filled by Lys124. Gly163 contacts substrate. Positions 207 and 238 each coordinate NADP(+). Ser381 lines the substrate pocket.

Belongs to the Glu/Leu/Phe/Val dehydrogenases family. As to quaternary structure, homohexamer.

It catalyses the reaction L-glutamate + NADP(+) + H2O = 2-oxoglutarate + NH4(+) + NADPH + H(+). Catalyzes the reversible oxidative deamination of glutamate to alpha-ketoglutarate and ammonia. This is NADP-specific glutamate dehydrogenase (gdhA) from Helicobacter pylori (strain J99 / ATCC 700824) (Campylobacter pylori J99).